Here is a 139-residue protein sequence, read N- to C-terminus: MAGNNISGEELIEQANYMKSLIDSLNSRIASLSATLSEANQTLSFLKDNESDNSKQLRIMIGSGIYADATIKKDKFIVPVGSGVFIEEERERTIKRLSENLKDLNDSINRLNQQKKELENNYNMLLMQIQELDNNVRQS.

Belongs to the prefoldin subunit alpha family. Heterohexamer of two alpha and four beta subunits.

It localises to the cytoplasm. Functionally, molecular chaperone capable of stabilizing a range of proteins. Seems to fulfill an ATP-independent, HSP70-like function in archaeal de novo protein folding. In Picrophilus torridus (strain ATCC 700027 / DSM 9790 / JCM 10055 / NBRC 100828 / KAW 2/3), this protein is Prefoldin subunit alpha.